Reading from the N-terminus, the 430-residue chain is Dihydroorotase (430 aa).

Positions 57 and 59 each coordinate Zn(2+). Substrate contacts are provided by residues 59–61 (HLR) and asparagine 91. 3 residues coordinate Zn(2+): aspartate 151, histidine 178, and histidine 231. Residue asparagine 277 participates in substrate binding. Aspartate 304 is a binding site for Zn(2+). Residue aspartate 304 is part of the active site. Residues histidine 308 and 322–323 (PG) each bind substrate.

Belongs to the metallo-dependent hydrolases superfamily. DHOase family. Class I DHOase subfamily. Zn(2+) is required as a cofactor.

It catalyses the reaction (S)-dihydroorotate + H2O = N-carbamoyl-L-aspartate + H(+). Its pathway is pyrimidine metabolism; UMP biosynthesis via de novo pathway; (S)-dihydroorotate from bicarbonate: step 3/3. Its function is as follows. Catalyzes the reversible cyclization of carbamoyl aspartate to dihydroorotate. The polypeptide is Dihydroorotase (Mycobacterium bovis (strain ATCC BAA-935 / AF2122/97)).